The following is a 144-amino-acid chain: 3-hydroxyacyl-[acyl-carrier-protein] dehydratase FabZ (144 aa).

Residue His-51 is part of the active site.

The protein belongs to the thioester dehydratase family. FabZ subfamily.

The protein resides in the cytoplasm. It catalyses the reaction a (3R)-hydroxyacyl-[ACP] = a (2E)-enoyl-[ACP] + H2O. Functionally, involved in unsaturated fatty acids biosynthesis. Catalyzes the dehydration of short chain beta-hydroxyacyl-ACPs and long chain saturated and unsaturated beta-hydroxyacyl-ACPs. In Clostridium botulinum (strain Loch Maree / Type A3), this protein is 3-hydroxyacyl-[acyl-carrier-protein] dehydratase FabZ.